The primary structure comprises 495 residues: UDP-N-acetylmuramoyl-L-alanyl-D-glutamate--2,6-diaminopimelate ligase (495 aa).

Residues leucine 27, serine 29, and 44–46 (HQA) contribute to the UDP-N-acetyl-alpha-D-muramoyl-L-alanyl-D-glutamate site. 116-122 (GTNGKTT) lines the ATP pocket. UDP-N-acetyl-alpha-D-muramoyl-L-alanyl-D-glutamate contacts are provided by residues asparagine 157, 158 to 159 (TT), serine 185, glutamine 191, and arginine 193. The residue at position 225 (lysine 225) is an N6-carboxylysine. Meso-2,6-diaminopimelate is bound by residues arginine 390, 414–417 (DNPR), glycine 465, and glutamate 469. The short motif at 414–417 (DNPR) is the Meso-diaminopimelate recognition motif element.

This sequence belongs to the MurCDEF family. MurE subfamily. Requires Mg(2+) as cofactor. In terms of processing, carboxylation is probably crucial for Mg(2+) binding and, consequently, for the gamma-phosphate positioning of ATP.

The protein localises to the cytoplasm. The enzyme catalyses UDP-N-acetyl-alpha-D-muramoyl-L-alanyl-D-glutamate + meso-2,6-diaminopimelate + ATP = UDP-N-acetyl-alpha-D-muramoyl-L-alanyl-gamma-D-glutamyl-meso-2,6-diaminopimelate + ADP + phosphate + H(+). It functions in the pathway cell wall biogenesis; peptidoglycan biosynthesis. Catalyzes the addition of meso-diaminopimelic acid to the nucleotide precursor UDP-N-acetylmuramoyl-L-alanyl-D-glutamate (UMAG) in the biosynthesis of bacterial cell-wall peptidoglycan. The protein is UDP-N-acetylmuramoyl-L-alanyl-D-glutamate--2,6-diaminopimelate ligase of Escherichia coli O157:H7.